Consider the following 101-residue polypeptide: Large ribosomal subunit protein uL23 (101 aa).

It belongs to the universal ribosomal protein uL23 family. In terms of assembly, part of the 50S ribosomal subunit. Contacts protein L29, and trigger factor when it is bound to the ribosome.

One of the early assembly proteins it binds 23S rRNA. One of the proteins that surrounds the polypeptide exit tunnel on the outside of the ribosome. Forms the main docking site for trigger factor binding to the ribosome. The sequence is that of Large ribosomal subunit protein uL23 from Synechocystis sp. (strain ATCC 27184 / PCC 6803 / Kazusa).